A 344-amino-acid polypeptide reads, in one-letter code: tRNA N6-adenosine threonylcarbamoyltransferase (344 aa).

Residues His112 and His116 each contribute to the Fe cation site. Residues Leu134 to Gly138, Asp167, Gly180, and Asn280 contribute to the substrate site. A Fe cation-binding site is contributed by Asp308.

It belongs to the KAE1 / TsaD family. The cofactor is Fe(2+).

The protein resides in the cytoplasm. The catalysed reaction is L-threonylcarbamoyladenylate + adenosine(37) in tRNA = N(6)-L-threonylcarbamoyladenosine(37) in tRNA + AMP + H(+). Required for the formation of a threonylcarbamoyl group on adenosine at position 37 (t(6)A37) in tRNAs that read codons beginning with adenine. Is involved in the transfer of the threonylcarbamoyl moiety of threonylcarbamoyl-AMP (TC-AMP) to the N6 group of A37, together with TsaE and TsaB. TsaD likely plays a direct catalytic role in this reaction. The polypeptide is tRNA N6-adenosine threonylcarbamoyltransferase (Rickettsia rickettsii (strain Iowa)).